Here is a 209-residue protein sequence, read N- to C-terminus: C-type lectin domain family 6 member A (209 aa).

Topologically, residues 1–20 are cytoplasmic; sequence MMQEQQPQSTEKRGWLSLRL. Residues 21–41 traverse the membrane as a helical; Signal-anchor for type II membrane protein segment; that stretch reads WSVAGISIALLSACFIVSCVV. At 42-209 the chain is on the extracellular side; sequence TYHFTYGETG…SICEMNKIYL (168 aa). Cystine bridges form between Cys66–Cys78, Cys79–Cys90, Cys107–Cys202, and Cys176–Cys194. A C-type lectin domain is found at 86–203; the sequence is FGSSCYFISS…CETRRNSICE (118 aa). Positions 116, 118, and 122 each coordinate Ca(2+). N-linked (GlcNAc...) asparagine glycosylation occurs at Asn131. 3 residues coordinate Ca(2+): Glu168, Asn170, and Glu174. Alpha-D-mannopyranose contacts are provided by residues 168 to 170, Glu174, Trp182, 190 to 191, and Arg198; these read EPN and ND. A glycan (N-linked (GlcNAc...) asparagine) is linked at Asn170. Residues Asn190 and Asp191 each coordinate Ca(2+). Position 203 (Glu203) interacts with Ca(2+).

As to quaternary structure, associated with FCER1G. Heterodimer with CLEC4D; this heterodimer forms a pattern recognition receptor (PRR) against fungal infection. In terms of tissue distribution, expressed in lung, spleen, lymph node, leukocytes, bone marrow, tonsils and dendritic cells. Strongly expressed in purified monocytes and weakly in B-cells. In peripheral blood cells, preferentially expressed in plasmacytoids rather than myeloids.

It is found in the cell membrane. Calcium-dependent lectin that acts as a pattern recognition receptor (PRR) of the innate immune system: specifically recognizes and binds alpha-mannans on C.albicans hypheas. Binding of C.albicans alpha-mannans to this receptor complex leads to phosphorylation of the immunoreceptor tyrosine-based activation motif (ITAM) of FCER1G, triggering activation of SYK, CARD9 and NF-kappa-B, consequently driving maturation of antigen-presenting cells and shaping antigen-specific priming of T-cells toward effector T-helper 1 and T-helper 17 cell subtypes. Recognizes also, in a mannose-dependent manner, allergens from house dust mite and fungi, by promoting cysteinyl leukotriene production. Recognizes soluble elements from the eggs of Shistosoma mansoni altering adaptive immune responses. The polypeptide is C-type lectin domain family 6 member A (Homo sapiens (Human)).